A 126-amino-acid polypeptide reads, in one-letter code: Aspartate 1-decarboxylase (126 aa).

Ser-25 (schiff-base intermediate with substrate; via pyruvic acid) is an active-site residue. Position 25 is a pyruvic acid (Ser) (Ser-25). Thr-57 contacts substrate. The active-site Proton donor is Tyr-58. Gly-73–Ala-75 contributes to the substrate binding site.

Belongs to the PanD family. Heterooctamer of four alpha and four beta subunits. Pyruvate is required as a cofactor. Is synthesized initially as an inactive proenzyme, which is activated by self-cleavage at a specific serine bond to produce a beta-subunit with a hydroxyl group at its C-terminus and an alpha-subunit with a pyruvoyl group at its N-terminus.

The protein resides in the cytoplasm. The catalysed reaction is L-aspartate + H(+) = beta-alanine + CO2. The protein operates within cofactor biosynthesis; (R)-pantothenate biosynthesis; beta-alanine from L-aspartate: step 1/1. Its function is as follows. Catalyzes the pyruvoyl-dependent decarboxylation of aspartate to produce beta-alanine. The sequence is that of Aspartate 1-decarboxylase from Yersinia pseudotuberculosis serotype IB (strain PB1/+).